Consider the following 215-residue polypeptide: Nucleoside triphosphate pyrophosphatase (215 aa).

Aspartate 77 (proton acceptor) is an active-site residue.

This sequence belongs to the Maf family. The cofactor is a divalent metal cation.

Its subcellular location is the cytoplasm. The enzyme catalyses a ribonucleoside 5'-triphosphate + H2O = a ribonucleoside 5'-phosphate + diphosphate + H(+). It carries out the reaction a 2'-deoxyribonucleoside 5'-triphosphate + H2O = a 2'-deoxyribonucleoside 5'-phosphate + diphosphate + H(+). Functionally, nucleoside triphosphate pyrophosphatase. May have a dual role in cell division arrest and in preventing the incorporation of modified nucleotides into cellular nucleic acids. The polypeptide is Nucleoside triphosphate pyrophosphatase (Rickettsia peacockii (strain Rustic)).